A 275-amino-acid polypeptide reads, in one-letter code: Small ribosomal subunit protein uS3 (275 aa).

Residues 38 to 106 (IRRLLSSGLE…QVQLNILEVK (69 aa)) form the KH type-2 domain. Positions 217–275 (AVPAGADRPRRERPAGSRPRRSGASGTTATGTEAGRAVGSEEPAAAESATTPEAQSTES) are disordered. The segment covering 238–275 (SGASGTTATGTEAGRAVGSEEPAAAESATTPEAQSTES) has biased composition (low complexity).

Belongs to the universal ribosomal protein uS3 family. Part of the 30S ribosomal subunit. Forms a tight complex with proteins S10 and S14.

Functionally, binds the lower part of the 30S subunit head. Binds mRNA in the 70S ribosome, positioning it for translation. This Mycobacterium marinum (strain ATCC BAA-535 / M) protein is Small ribosomal subunit protein uS3.